An 834-amino-acid polypeptide reads, in one-letter code: Periplasmic nitrate reductase (834 aa).

Residues 1-29 (MSLTRRQFAKANAAAIAATVAGMPIASTA) constitute a signal peptide (tat-type signal). The 4Fe-4S Mo/W bis-MGD-type domain maps to 41–97 (LKWDKAPCRFCGTGCGVMVATRENRVVATHGDVKADVNRGINCVKGYFLSKIMYGTD). [4Fe-4S] cluster-binding residues include Cys-48, Cys-51, Cys-55, and Cys-83. Residues Lys-85, Gln-152, Asn-177, Cys-181, 214–221 (WGSNMAEM), 245–249 (STFEH), 264–266 (QTD), Met-375, Gln-379, Asn-485, 511–512 (SD), Lys-534, Asp-561, and 721–730 (TGRVLEHWHT) each bind Mo-bis(molybdopterin guanine dinucleotide). Substrate is bound at residue Phe-797. Residues Asn-805 and Lys-822 each contribute to the Mo-bis(molybdopterin guanine dinucleotide) site.

This sequence belongs to the prokaryotic molybdopterin-containing oxidoreductase family. NasA/NapA/NarB subfamily. In terms of assembly, component of the periplasmic nitrate reductase NapAB complex composed of NapA and NapB. The cofactor is [4Fe-4S] cluster. Mo-bis(molybdopterin guanine dinucleotide) is required as a cofactor. Predicted to be exported by the Tat system. The position of the signal peptide cleavage has not been experimentally proven.

Its subcellular location is the periplasm. It catalyses the reaction 2 Fe(II)-[cytochrome] + nitrate + 2 H(+) = 2 Fe(III)-[cytochrome] + nitrite + H2O. In terms of biological role, catalytic subunit of the periplasmic nitrate reductase complex NapAB. Receives electrons from NapB and catalyzes the reduction of nitrate to nitrite. The chain is Periplasmic nitrate reductase from Stutzerimonas stutzeri (Pseudomonas stutzeri).